The sequence spans 328 residues: UDP-N-acetylglucosamine transporter YEA4 (328 aa).

10 helical membrane passes run 1–21, 30–50, 66–86, 98–118, 122–142, 166–186, 198–218, 241–261, 274–294, and 298–318; these read MSFV…VISF, INLG…IQLP, HIPL…SVAN, IHII…WAVC, YSKL…VASL, SMFG…LSLL, WKET…LGYT, LPIA…FICI, LTLS…SVYI, and VLSV…GLYS.

This sequence belongs to the nucleotide-sugar transporter family. SLC35A subfamily.

Its subcellular location is the golgi apparatus membrane. In terms of biological role, sugar transporter that specifically mediates the transport of UDP-N-acetylglucosamine (UDP-GlcNAc) from the cytosol into Golgi vesicles where glycosyltransferases function. The protein is UDP-N-acetylglucosamine transporter YEA4 (YEA4) of Kluyveromyces lactis (strain ATCC 8585 / CBS 2359 / DSM 70799 / NBRC 1267 / NRRL Y-1140 / WM37) (Yeast).